The sequence spans 117 residues: Large ribosomal subunit protein uL18 (117 aa).

Belongs to the universal ribosomal protein uL18 family. Part of the 50S ribosomal subunit; part of the 5S rRNA/L5/L18/L25 subcomplex. Contacts the 5S and 23S rRNAs.

Its function is as follows. This is one of the proteins that bind and probably mediate the attachment of the 5S RNA into the large ribosomal subunit, where it forms part of the central protuberance. The chain is Large ribosomal subunit protein uL18 from Tolumonas auensis (strain DSM 9187 / NBRC 110442 / TA 4).